The primary structure comprises 944 residues: Calcium-transporting ATPase type 2C member 2 (944 aa).

Residues 1-104 lie on the Cytoplasmic side of the membrane; it reads MGRRFKFLQK…DNTEPVWKKY (104 aa). Residues 69 to 93 are interaction with ORAI1; sequence VDLDSGLSEFAVAQRRLVHGWNEFV. A helical transmembrane segment spans residues 105–125; sequence LDQFRNPLILLLLGSSVVSVL. Residues 126–127 are Extracellular-facing; the sequence is TK. The chain crosses the membrane as a helical span at residues 128–148; it reads EYEDAISIALAVLIVVTVGFI. Topologically, residues 149 to 229 are cytoplasmic; the sequence is QEYRSEKSLE…EVEPCSKTDS (81 aa). A helical membrane pass occupies residues 230–250; it reads PLAGGGDLSTLSNVVFMGTLV. At 251-291 the chain is on the extracellular side; that stretch reads QCGKGQGVVIGTGEQSQFGEVFKMMRAEETPKTPLQKSMDK. Position 262 is a phosphothreonine (threonine 262). Serine 266 carries the post-translational modification Phosphoserine. A helical transmembrane segment spans residues 292-312; the sequence is LGKQLTVFSFGIIGLLMLVGW. Over 313–329 the chain is Cytoplasmic; the sequence is VQGKPLLSMFTIGVSLA. Valine 330, alanine 331, isoleucine 333, and glutamate 335 together coordinate Ca(2+). Residues 330–350 traverse the membrane as a helical segment; that stretch reads VAAIPEGLPIVVMVTLVLGVL. At 351–748 the chain is on the extracellular side; sequence RMAKKRVIVK…IAALSLITLS (398 aa). The active-site 4-aspartylphosphate intermediate is the aspartate 377. The Mg(2+) site is built by aspartate 672 and aspartate 676. A helical transmembrane segment spans residues 749 to 769; sequence TVCNLPNPLNAMQILWVNIIM. The Ca(2+) site is built by asparagine 766 and aspartate 770. Residues 770 to 802 are Cytoplasmic-facing; the sequence is DGPPAQSLGVEPVDRDALKRPPRSVKDTILNRA. A helical transmembrane segment spans residues 803-823; it reads LILKILMSAAVILGGTLFIFW. Over 824–835 the chain is Extracellular; the sequence is REIPENRTSTPR. The helical transmembrane segment at 836-853 threads the bilayer; it reads TTTMAFTCFVFFDLFNAL. Residues 854-872 are Cytoplasmic-facing; it reads SCRSQTKLIFEIGFFRNRM. The helical transmembrane segment at 873–893 threads the bilayer; that stretch reads FLYSILGSLLGQLAVIYAPPL. At 894–903 the chain is on the extracellular side; the sequence is QKVFQTENLS. A helical membrane pass occupies residues 904 to 924; sequence ALDLLLLTGLASSVFILSELL. Over 925 to 944 the chain is Cytoplasmic; the sequence is KLCEKFCSRAKADQMLPEAV.

This sequence belongs to the cation transport ATPase (P-type) (TC 3.A.3) family. Type IIA subfamily. Interacts (via N-terminus) with ORAI1 (via N- and C-termini); this interaction regulates Ca(2+) influx at the plasma membrane.

The protein localises to the golgi apparatus. Its subcellular location is the trans-Golgi network membrane. It localises to the cell membrane. It is found in the basolateral cell membrane. It catalyses the reaction Ca(2+)(in) + ATP + H2O = Ca(2+)(out) + ADP + phosphate + H(+). The enzyme catalyses Mn(2+)(in) + ATP + H2O = Mn(2+)(out) + ADP + phosphate + H(+). Its function is as follows. ATP-driven pump that supplies the Golgi apparatus with Ca(2+) and Mn(2+) ions, both essential cofactors for processing and trafficking of newly synthesized proteins in the secretory pathway. Within a catalytic cycle, acquires Ca(2+) or Mn(2+) ions on the cytoplasmic side of the membrane and delivers them to the lumenal side. The transfer of ions across the membrane is coupled to ATP hydrolysis and is associated with a transient phosphorylation that shifts the pump conformation from inward-facing to outward-facing state. Induces Ca(2+) influx independently of its ATP-driven pump function. At the basolateral membrane of mammary epithelial cells, interacts with Ca(2+) channel ORAI1 and mediates Ca(2+) entry independently of the Ca(2+) content of endoplasmic reticulum or Golgi stores. May facilitate transepithelial transport of large quantities of Ca(2+) for milk secretion via activation of Ca(2+) influx channels at the plasma membrane and active Ca(2+) transport at the Golgi apparatus. This Rattus norvegicus (Rat) protein is Calcium-transporting ATPase type 2C member 2 (Atp2c2).